The sequence spans 452 residues: Cell division protein FtsZ (452 aa).

GTP-binding positions include 24–28 (GAGSN), 111–113 (GTG), glutamate 142, arginine 146, and aspartate 190.

Belongs to the FtsZ family. In terms of assembly, homodimer. Polymerizes to form a dynamic ring structure in a strictly GTP-dependent manner. Interacts directly with several other division proteins.

Its subcellular location is the cytoplasm. Its function is as follows. Essential cell division protein that forms a contractile ring structure (Z ring) at the future cell division site. The regulation of the ring assembly controls the timing and the location of cell division. One of the functions of the FtsZ ring is to recruit other cell division proteins to the septum to produce a new cell wall between the dividing cells. Binds GTP and shows GTPase activity. In Rickettsia typhi (strain ATCC VR-144 / Wilmington), this protein is Cell division protein FtsZ.